A 345-amino-acid polypeptide reads, in one-letter code: Uroporphyrinogen decarboxylase (345 aa).

Substrate is bound by residues 23 to 27 (RQAGR), Asp73, Tyr149, Thr203, and His319.

This sequence belongs to the uroporphyrinogen decarboxylase family. Homodimer.

It localises to the cytoplasm. The catalysed reaction is uroporphyrinogen III + 4 H(+) = coproporphyrinogen III + 4 CO2. It participates in porphyrin-containing compound metabolism; protoporphyrin-IX biosynthesis; coproporphyrinogen-III from 5-aminolevulinate: step 4/4. In terms of biological role, catalyzes the decarboxylation of four acetate groups of uroporphyrinogen-III to yield coproporphyrinogen-III. This chain is Uroporphyrinogen decarboxylase, found in Vesicomyosocius okutanii subsp. Calyptogena okutanii (strain HA).